The primary structure comprises 861 residues: Extra-large guanine nucleotide-binding protein 2 (861 aa).

2 disordered regions span residues 1–32 (MAAV…TSSG) and 121–168 (VSGS…DDRV). The span at 131-143 (KRLDVPEEVKSPA) shows a compositional bias: basic and acidic residues. A compositionally biased stretch (low complexity) spans 146–156 (RLSPSSPLSAS). The span at 157 to 168 (AREEDHLDDDRV) shows a compositional bias: basic and acidic residues. The Nuclear localization signal signature appears at 204–211 (RAERKGKR). The RING-type; degenerate zinc-finger motif lies at 214–257 (CYRCQLGNRFTEKEVCIVCDAKYCFNCVRRAMGAMPEGRKCQAC). One can recognise a G-alpha domain in the interval 461–853 (MLNKLLLIGS…TSMFQEMSTT (393 aa)). The segment at 464–477 (KLLLIGSEKGGATT) is G1 motif. 469–477 (GSEKGGATT) is a GTP binding site. Thr-476 is a Ca(2+) binding site. A disordered region spans residues 523-545 (EMSNDQSSGNVGDETSAKPGNSI). 624-632 (DILQAEGLS) lines the GTP pocket. Residues 624–632 (DILQAEGLS) form a G2 motif region. Ca(2+) is bound at residue Ser-632. Positions 665–674 (YQLIRLNPRS) are G3 motif. The G4 motif stretch occupies residues 737 to 744 (LLVLTKFD). 741 to 744 (TKFD) serves as a coordination point for GTP. The interval 818-823 (QVSLES) is G5 motif.

It belongs to the G-alpha family. XLG subfamily. As to quaternary structure, interacts with GB1. Component of a G-protein complex at least composed of XLG2 and GB1. Interacts with RTV1. It depends on Ca(2+) as a cofactor. In terms of tissue distribution, ubiquitous. Strongly expressed in vascular tissues, root and shoot meristems and lateral root primordia.

Its subcellular location is the nucleus. In terms of biological role, guanine nucleotide-binding proteins (G proteins) are involved as modulators or transducers in various transmembrane signaling systems. Binds GTP with specificity. Plays a role in the root morphogenesis by regulation of the cell proliferation. Acts as a positive regulator in resistance to pathogen that triggers the salicylic acid (SA) pathway. Promotes the DNA binding activity of RTV1 specifically to promoter regions of FT and SOC1 in vivo leading to the activation of floral integrator genes. The chain is Extra-large guanine nucleotide-binding protein 2 (XLG2) from Arabidopsis thaliana (Mouse-ear cress).